We begin with the raw amino-acid sequence, 209 residues long: Uracil phosphoribosyltransferase (209 aa).

Residues Arg79, Arg104, and 131-139 (DPMLATGGS) contribute to the 5-phospho-alpha-D-ribose 1-diphosphate site. Uracil contacts are provided by residues Ile194 and 199–201 (GDA). Asp200 provides a ligand contact to 5-phospho-alpha-D-ribose 1-diphosphate.

This sequence belongs to the UPRTase family. Mg(2+) serves as cofactor.

The catalysed reaction is UMP + diphosphate = 5-phospho-alpha-D-ribose 1-diphosphate + uracil. Its pathway is pyrimidine metabolism; UMP biosynthesis via salvage pathway; UMP from uracil: step 1/1. With respect to regulation, allosterically activated by GTP. Functionally, catalyzes the conversion of uracil and 5-phospho-alpha-D-ribose 1-diphosphate (PRPP) to UMP and diphosphate. This is Uracil phosphoribosyltransferase from Streptococcus pyogenes serotype M49 (strain NZ131).